Reading from the N-terminus, the 290-residue chain is Pantothenate synthetase (290 aa).

34–41 (MGNLHDGH) contacts ATP. H41 functions as the Proton donor in the catalytic mechanism. Q65 contacts (R)-pantoate. Q65 contributes to the beta-alanine binding site. 156–159 (GKKD) is an ATP binding site. Q162 provides a ligand contact to (R)-pantoate. Residues A185 and 193 to 196 (LSSR) contribute to the ATP site.

Belongs to the pantothenate synthetase family. As to quaternary structure, homodimer.

It is found in the cytoplasm. It carries out the reaction (R)-pantoate + beta-alanine + ATP = (R)-pantothenate + AMP + diphosphate + H(+). The protein operates within cofactor biosynthesis; (R)-pantothenate biosynthesis; (R)-pantothenate from (R)-pantoate and beta-alanine: step 1/1. Catalyzes the condensation of pantoate with beta-alanine in an ATP-dependent reaction via a pantoyl-adenylate intermediate. This is Pantothenate synthetase from Acidovorax ebreus (strain TPSY) (Diaphorobacter sp. (strain TPSY)).